The chain runs to 682 residues: Potassium-transporting ATPase ATP-binding subunit (682 aa).

Helical transmembrane passes span 34-54 (PVMF…IAMA), 62-82 (ALFS…ANFA), 219-239 (IALT…TATL), and 254-274 (VLVA…LSAI). The active-site 4-aspartylphosphate intermediate is D307. Residues D344, E348, 377-384 (FTAQSRMS), and K395 each bind ATP. Positions 518 and 522 each coordinate Mg(2+). Transmembrane regions (helical) follow at residues 588–608 (FAII…LNIM), 616–636 (AILS…PLAL), and 656–676 (IYGL…DLLL).

The protein belongs to the cation transport ATPase (P-type) (TC 3.A.3) family. Type IA subfamily. In terms of assembly, the system is composed of three essential subunits: KdpA, KdpB and KdpC.

It is found in the cell inner membrane. The catalysed reaction is K(+)(out) + ATP + H2O = K(+)(in) + ADP + phosphate + H(+). Functionally, part of the high-affinity ATP-driven potassium transport (or Kdp) system, which catalyzes the hydrolysis of ATP coupled with the electrogenic transport of potassium into the cytoplasm. This subunit is responsible for energy coupling to the transport system and for the release of the potassium ions to the cytoplasm. In Shigella boydii serotype 4 (strain Sb227), this protein is Potassium-transporting ATPase ATP-binding subunit.